We begin with the raw amino-acid sequence, 62 residues long: Photosystem II reaction center protein Z (62 aa).

Transmembrane regions (helical) follow at residues 8–28 (ALIA…VAYA) and 41–61 (YLGS…NFFV).

The protein belongs to the PsbZ family. PSII is composed of 1 copy each of membrane proteins PsbA, PsbB, PsbC, PsbD, PsbE, PsbF, PsbH, PsbI, PsbJ, PsbK, PsbL, PsbM, PsbT, PsbX, PsbY, PsbZ, Psb30/Ycf12, peripheral proteins PsbO, CyanoQ (PsbQ), PsbU, PsbV and a large number of cofactors. It forms dimeric complexes.

Its subcellular location is the cellular thylakoid membrane. Its function is as follows. May control the interaction of photosystem II (PSII) cores with the light-harvesting antenna, regulates electron flow through the 2 photosystem reaction centers. PSII is a light-driven water plastoquinone oxidoreductase, using light energy to abstract electrons from H(2)O, generating a proton gradient subsequently used for ATP formation. This is Photosystem II reaction center protein Z from Rippkaea orientalis (strain PCC 8801 / RF-1) (Cyanothece sp. (strain PCC 8801)).